The sequence spans 272 residues: Large ribosomal subunit protein uL2 (272 aa).

Residues 222–272 (GVAMNPIDHPLGGGEGKSSGGRAACTPWGKPEGVKTRKNKRTDKFIIKRRK) are disordered. A compositionally biased stretch (basic and acidic residues) spans 263-272 (TDKFIIKRRK).

Belongs to the universal ribosomal protein uL2 family. In terms of assembly, part of the 50S ribosomal subunit. Forms a bridge to the 30S subunit in the 70S ribosome.

One of the primary rRNA binding proteins. Required for association of the 30S and 50S subunits to form the 70S ribosome, for tRNA binding and peptide bond formation. It has been suggested to have peptidyltransferase activity; this is somewhat controversial. Makes several contacts with the 16S rRNA in the 70S ribosome. The chain is Large ribosomal subunit protein uL2 from Thermodesulfovibrio yellowstonii (strain ATCC 51303 / DSM 11347 / YP87).